The primary structure comprises 249 residues: MIT domain-containing protein 1 (249 aa).

Residues 8-86 (QDPQSTAAAT…KYLDQEKEDG (79 aa)) enclose the MIT domain. The segment at 168 to 231 (RGLQEIEESL…SLGYCDFDLR (64 aa)) is important for association with membranes.

Homodimer. Interacts (via MIT domain) with CHMP1A, CHMP1B, CHMP2A and IST1.

It localises to the late endosome membrane. The protein localises to the midbody. The protein resides in the membrane. In terms of biological role, required for efficient abscission at the end of cytokinesis, together with components of the ESCRT-III complex. This is MIT domain-containing protein 1 (MITD1) from Homo sapiens (Human).